The sequence spans 240 residues: Uridylate kinase (240 aa).

12–15 (KLSG) contacts ATP. The segment at 20–25 (GDKGFG) is involved in allosteric activation by GTP. Glycine 54 provides a ligand contact to UMP. ATP contacts are provided by glycine 55 and arginine 59. Residues aspartate 74 and 135 to 142 (TGSPYFST) each bind UMP. Positions 163, 169, and 172 each coordinate ATP.

The protein belongs to the UMP kinase family. As to quaternary structure, homohexamer.

Its subcellular location is the cytoplasm. It carries out the reaction UMP + ATP = UDP + ADP. It participates in pyrimidine metabolism; CTP biosynthesis via de novo pathway; UDP from UMP (UMPK route): step 1/1. Allosterically activated by GTP. Inhibited by UTP. In terms of biological role, catalyzes the reversible phosphorylation of UMP to UDP. This Limosilactobacillus reuteri (strain DSM 20016) (Lactobacillus reuteri) protein is Uridylate kinase.